An 829-amino-acid polypeptide reads, in one-letter code: Periplasmic nitrate reductase (829 aa).

The tat-type signal signal peptide spans 1–30 (MKLSRRDFMKANAVAAAAAVAGVSAPTLAA). The region spanning 41 to 97 (IKWDKAPCRFCGTGCSVLVGSQDGRVVATQGDPDAPVNRGLNCIKGYFLSKIMYGED) is the 4Fe-4S Mo/W bis-MGD-type domain. 4 residues coordinate [4Fe-4S] cluster: Cys-48, Cys-51, Cys-55, and Cys-83. Mo-bis(molybdopterin guanine dinucleotide)-binding positions include Lys-85, Gln-152, Asn-177, Cys-181, 214-221 (WGSNMAEM), 245-249 (STFEH), 264-266 (QTD), Met-374, Gln-378, Asn-484, 510-511 (SD), Lys-533, Asp-560, and 719-728 (TGRVLEHWHT). Phe-795 contributes to the substrate binding site. 2 residues coordinate Mo-bis(molybdopterin guanine dinucleotide): Asn-803 and Lys-820.

This sequence belongs to the prokaryotic molybdopterin-containing oxidoreductase family. NasA/NapA/NarB subfamily. As to quaternary structure, component of the periplasmic nitrate reductase NapAB complex composed of NapA and NapB. [4Fe-4S] cluster serves as cofactor. It depends on Mo-bis(molybdopterin guanine dinucleotide) as a cofactor. Post-translationally, predicted to be exported by the Tat system. The position of the signal peptide cleavage has not been experimentally proven.

It is found in the periplasm. The catalysed reaction is 2 Fe(II)-[cytochrome] + nitrate + 2 H(+) = 2 Fe(III)-[cytochrome] + nitrite + H2O. In terms of biological role, catalytic subunit of the periplasmic nitrate reductase complex NapAB. Receives electrons from NapB and catalyzes the reduction of nitrate to nitrite. This Aeromonas salmonicida (strain A449) protein is Periplasmic nitrate reductase.